Here is a 226-residue protein sequence, read N- to C-terminus: Putative mitochondrial outer membrane protein porin 5 (226 aa).

The protein belongs to the eukaryotic mitochondrial porin (TC 1.B.8.1) family.

It localises to the mitochondrion outer membrane. Its function is as follows. Putative channel that allows diffusion of small hydrophilic molecules through membranes. The chain is Putative mitochondrial outer membrane protein porin 5 (VDAC5) from Arabidopsis thaliana (Mouse-ear cress).